A 150-amino-acid chain; its full sequence is NADH-quinone oxidoreductase subunit A (150 aa).

3 helical membrane passes run 14–34 (FAVF…GAFF), 66–86 (FYLV…LYAW), and 96–116 (IGFI…VYLV).

The protein belongs to the complex I subunit 3 family. In terms of assembly, NDH-1 is composed of 13 different subunits. Subunits NuoA, H, J, K, L, M, N constitute the membrane sector of the complex.

The protein resides in the cell inner membrane. The catalysed reaction is a quinone + NADH + 5 H(+)(in) = a quinol + NAD(+) + 4 H(+)(out). Its function is as follows. NDH-1 shuttles electrons from NADH, via FMN and iron-sulfur (Fe-S) centers, to quinones in the respiratory chain. The immediate electron acceptor for the enzyme in this species is believed to be ubiquinone. Couples the redox reaction to proton translocation (for every two electrons transferred, four hydrogen ions are translocated across the cytoplasmic membrane), and thus conserves the redox energy in a proton gradient. The polypeptide is NADH-quinone oxidoreductase subunit A (Yersinia enterocolitica serotype O:8 / biotype 1B (strain NCTC 13174 / 8081)).